The following is a 156-amino-acid chain: Transcription elongation factor GreA (156 aa).

Positions 46–66 form a coiled coil; the sequence is AEYHSAREKQSFIEGRIKELE.

Belongs to the GreA/GreB family.

In terms of biological role, necessary for efficient RNA polymerase transcription elongation past template-encoded arresting sites. The arresting sites in DNA have the property of trapping a certain fraction of elongating RNA polymerases that pass through, resulting in locked ternary complexes. Cleavage of the nascent transcript by cleavage factors such as GreA or GreB allows the resumption of elongation from the new 3'terminus. GreA releases sequences of 2 to 3 nucleotides. This chain is Transcription elongation factor GreA, found in Ruegeria pomeroyi (strain ATCC 700808 / DSM 15171 / DSS-3) (Silicibacter pomeroyi).